The following is a 721-amino-acid chain: YTH domain-containing protein 1 (721 aa).

Residues 29 to 38 show a composition bias toward acidic residues; sequence EADIAEELQD. The tract at residues 29–239 is disordered; the sequence is EADIAEELQD…GGGTHSHSQK (211 aa). A compositionally biased stretch (low complexity) spans 48-75; that stretch reads SESNGGDSSDSEPSISSVSTATSSLAGS. The segment covering 135–151 has biased composition (basic and acidic residues); the sequence is ASDKVKSKSPDTEDRQP. The region spanning 254-391 is the YTH domain; sequence TRFFLIKSNN…KIGGELCRLF (138 aa). RNA is bound by residues 260 to 262, tryptophan 276, and tryptophan 327; that span reads KSN. Disordered stretches follow at residues 424-471, 580-605, and 651-721; these read PPRS…RHHH, DGPG…DKAP, and AGGG…DNRR. Over residues 432 to 443 the composition is skewed to gly residues; sequence GHGGGGRGGGRG. Residues 451–471 are compositionally biased toward basic residues; the sequence is PMRHKRSYHGAPHHRPYRHHH. Residues 583–600 are compositionally biased toward pro residues; that stretch reads GAPPLPDYPPPQRPPPPG. Over residues 651-670 the composition is skewed to gly residues; that stretch reads AGGGMGAGGGSGGGMGGPGG. Positions 699–708 are enriched in basic and acidic residues; that stretch reads RDSRPFRERG.

The protein localises to the nucleus. Its function is as follows. Regulator of alternative splicing that specifically recognizes and binds N6-methyladenosine (m6A)-containing RNAs. Acts by acting as a reader of m6A methylation. Required for sex determination and dosage compensation via Sxl alternative splicing: m6A methylation acts as a key regulator of Sxl pre-mRNA and promotes female-specific alternative splicing of Sxl, which determines female physiognomy. M6A methylation is also required for neuronal functions. This is YTH domain-containing protein 1 from Drosophila melanogaster (Fruit fly).